Consider the following 295-residue polypeptide: MNAILPKISTLPAKPAPTREWLAGIDLLLAKRYQRTALMSSKHFGPLRVQRPFYPEPDGCCHIYLLHPPGGLVIGDNLHIGASLQQGAQALITTPSAGKLYGAKGASEKQGQQVEFNLAAESCLEWLPQETIIFDGANGTLSTKVNLTGNAQYFGWDIIRLGRVASGEPFNTGTCAQRLQLWRDGLPLFIEKTKFEASSNMHREKWGLQNANTCATLTATLQLTRDSIDEMLEALAQLGVTNTGEWGLTQKESLFIVRYLGNSITDCRKGFEFIWQQTRAVFNGKPAEVPRIWRT.

The protein belongs to the UreD family. As to quaternary structure, ureD, UreF and UreG form a complex that acts as a GTP-hydrolysis-dependent molecular chaperone, activating the urease apoprotein by helping to assemble the nickel containing metallocenter of UreC. The UreE protein probably delivers the nickel.

The protein resides in the cytoplasm. In terms of biological role, required for maturation of urease via the functional incorporation of the urease nickel metallocenter. The sequence is that of Urease accessory protein UreD from Saccharophagus degradans (strain 2-40 / ATCC 43961 / DSM 17024).